A 155-amino-acid chain; its full sequence is Large ribosomal subunit protein bL9c (155 aa).

This sequence belongs to the bacterial ribosomal protein bL9 family.

The protein localises to the plastid. Its subcellular location is the chloroplast. Functionally, binds to the 23S rRNA. The chain is Large ribosomal subunit protein bL9c from Pyropia yezoensis (Susabi-nori).